The following is a 161-amino-acid chain: Small ribosomal subunit protein uS9 (161 aa).

The protein belongs to the universal ribosomal protein uS9 family.

This Rickettsia typhi (strain ATCC VR-144 / Wilmington) protein is Small ribosomal subunit protein uS9.